A 367-amino-acid chain; its full sequence is Phosphoribosylaminoimidazole-succinocarboxamide synthase (367 aa).

The protein belongs to the SAICAR synthetase family.

It catalyses the reaction 5-amino-1-(5-phospho-D-ribosyl)imidazole-4-carboxylate + L-aspartate + ATP = (2S)-2-[5-amino-1-(5-phospho-beta-D-ribosyl)imidazole-4-carboxamido]succinate + ADP + phosphate + 2 H(+). It functions in the pathway purine metabolism; IMP biosynthesis via de novo pathway; 5-amino-1-(5-phospho-D-ribosyl)imidazole-4-carboxamide from 5-amino-1-(5-phospho-D-ribosyl)imidazole-4-carboxylate: step 1/2. The sequence is that of Phosphoribosylaminoimidazole-succinocarboxamide synthase from Shewanella amazonensis (strain ATCC BAA-1098 / SB2B).